The primary structure comprises 201 residues: Peptidyl-tRNA hydrolase (201 aa).

Y14 is a binding site for tRNA. Catalysis depends on H19, which acts as the Proton acceptor. TRNA is bound by residues F64, N66, and N112.

This sequence belongs to the PTH family. Monomer.

The protein resides in the cytoplasm. The catalysed reaction is an N-acyl-L-alpha-aminoacyl-tRNA + H2O = an N-acyl-L-amino acid + a tRNA + H(+). Hydrolyzes ribosome-free peptidyl-tRNAs (with 1 or more amino acids incorporated), which drop off the ribosome during protein synthesis, or as a result of ribosome stalling. Functionally, catalyzes the release of premature peptidyl moieties from peptidyl-tRNA molecules trapped in stalled 50S ribosomal subunits, and thus maintains levels of free tRNAs and 50S ribosomes. This chain is Peptidyl-tRNA hydrolase, found in Rhodopseudomonas palustris (strain BisA53).